The chain runs to 172 residues: Protein GrpE (172 aa).

Residues 1-23 are disordered; sequence MNQDHPECDSEELTQNSPETDPL.

This sequence belongs to the GrpE family. Homodimer.

The protein resides in the cytoplasm. Participates actively in the response to hyperosmotic and heat shock by preventing the aggregation of stress-denatured proteins, in association with DnaK and GrpE. It is the nucleotide exchange factor for DnaK and may function as a thermosensor. Unfolded proteins bind initially to DnaJ; upon interaction with the DnaJ-bound protein, DnaK hydrolyzes its bound ATP, resulting in the formation of a stable complex. GrpE releases ADP from DnaK; ATP binding to DnaK triggers the release of the substrate protein, thus completing the reaction cycle. Several rounds of ATP-dependent interactions between DnaJ, DnaK and GrpE are required for fully efficient folding. The protein is Protein GrpE of Xylella fastidiosa (strain 9a5c).